Consider the following 193-residue polypeptide: Pyridoxal 5'-phosphate synthase subunit PdxT (193 aa).

L-glutamine is bound at residue 50 to 52 (GES). The active-site Nucleophile is Cys-82. L-glutamine contacts are provided by residues Arg-109 and 136–137 (IR). Active-site charge relay system residues include His-172 and Glu-174.

The protein belongs to the glutaminase PdxT/SNO family. As to quaternary structure, in the presence of PdxS, forms a dodecamer of heterodimers. Only shows activity in the heterodimer.

The enzyme catalyses aldehydo-D-ribose 5-phosphate + D-glyceraldehyde 3-phosphate + L-glutamine = pyridoxal 5'-phosphate + L-glutamate + phosphate + 3 H2O + H(+). It catalyses the reaction L-glutamine + H2O = L-glutamate + NH4(+). Its pathway is cofactor biosynthesis; pyridoxal 5'-phosphate biosynthesis. In terms of biological role, catalyzes the hydrolysis of glutamine to glutamate and ammonia as part of the biosynthesis of pyridoxal 5'-phosphate. The resulting ammonia molecule is channeled to the active site of PdxS. This chain is Pyridoxal 5'-phosphate synthase subunit PdxT, found in Streptococcus pneumoniae serotype 19F (strain G54).